Consider the following 141-residue polypeptide: Hemoglobin subunit alpha-2 (141 aa).

The 141-residue stretch at 1–141 folds into the Globin domain; it reads VLSPADKNNV…VSTVLTSKYR (141 aa). Histidine 58 contributes to the O2 binding site. Residue histidine 87 coordinates heme b.

This sequence belongs to the globin family. Heterotetramer of two alpha chains and two beta chains. Red blood cells.

Its function is as follows. Involved in oxygen transport from the lung to the various peripheral tissues. This is Hemoglobin subunit alpha-2 from Varecia variegata (Black-and-white ruffed lemur).